A 165-amino-acid polypeptide reads, in one-letter code: Lipoprotein signal peptidase (165 aa).

The next 2 membrane-spanning stretches (helical) occupy residues 68–88 (PLLP…GLFG) and 100–120 (GFLL…GEVI). Active-site residues include aspartate 121 and aspartate 137. Residues 130–150 (FPVFNIADISINVGLACLIFA) traverse the membrane as a helical segment.

Belongs to the peptidase A8 family.

It localises to the cell inner membrane. The enzyme catalyses Release of signal peptides from bacterial membrane prolipoproteins. Hydrolyzes -Xaa-Yaa-Zaa-|-(S,diacylglyceryl)Cys-, in which Xaa is hydrophobic (preferably Leu), and Yaa (Ala or Ser) and Zaa (Gly or Ala) have small, neutral side chains.. It functions in the pathway protein modification; lipoprotein biosynthesis (signal peptide cleavage). Functionally, this protein specifically catalyzes the removal of signal peptides from prolipoproteins. The polypeptide is Lipoprotein signal peptidase (Acaryochloris marina (strain MBIC 11017)).